Here is a 98-residue protein sequence, read N- to C-terminus: Small ribosomal subunit protein bS20 (98 aa).

Belongs to the bacterial ribosomal protein bS20 family.

Functionally, binds directly to 16S ribosomal RNA. The protein is Small ribosomal subunit protein bS20 of Synechococcus sp. (strain CC9902).